Consider the following 64-residue polypeptide: Protein translocase subunit SecE (64 aa).

A helical membrane pass occupies residues 35–55 (LVVLGTVAFITVFFAVVDYGI).

It belongs to the SecE/SEC61-gamma family. As to quaternary structure, component of the Sec protein translocase complex. Heterotrimer consisting of SecY, SecE and SecG subunits. The heterotrimers can form oligomers, although 1 heterotrimer is thought to be able to translocate proteins. Interacts with the ribosome. Interacts with SecDF, and other proteins may be involved. Interacts with SecA.

It is found in the cell membrane. Essential subunit of the Sec protein translocation channel SecYEG. Clamps together the 2 halves of SecY. May contact the channel plug during translocation. The polypeptide is Protein translocase subunit SecE (Halalkalibacterium halodurans (strain ATCC BAA-125 / DSM 18197 / FERM 7344 / JCM 9153 / C-125) (Bacillus halodurans)).